Consider the following 95-residue polypeptide: Aspartyl/glutamyl-tRNA(Asn/Gln) amidotransferase subunit C (95 aa).

It belongs to the GatC family. Heterotrimer of A, B and C subunits.

The catalysed reaction is L-glutamyl-tRNA(Gln) + L-glutamine + ATP + H2O = L-glutaminyl-tRNA(Gln) + L-glutamate + ADP + phosphate + H(+). It carries out the reaction L-aspartyl-tRNA(Asn) + L-glutamine + ATP + H2O = L-asparaginyl-tRNA(Asn) + L-glutamate + ADP + phosphate + 2 H(+). In terms of biological role, allows the formation of correctly charged Asn-tRNA(Asn) or Gln-tRNA(Gln) through the transamidation of misacylated Asp-tRNA(Asn) or Glu-tRNA(Gln) in organisms which lack either or both of asparaginyl-tRNA or glutaminyl-tRNA synthetases. The reaction takes place in the presence of glutamine and ATP through an activated phospho-Asp-tRNA(Asn) or phospho-Glu-tRNA(Gln). The protein is Aspartyl/glutamyl-tRNA(Asn/Gln) amidotransferase subunit C of Roseobacter denitrificans (strain ATCC 33942 / OCh 114) (Erythrobacter sp. (strain OCh 114)).